Reading from the N-terminus, the 251-residue chain is Imidazole glycerol phosphate synthase subunit HisF (251 aa).

Active-site residues include aspartate 11 and aspartate 130.

Belongs to the HisA/HisF family. Heterodimer of HisH and HisF.

It is found in the cytoplasm. It catalyses the reaction 5-[(5-phospho-1-deoxy-D-ribulos-1-ylimino)methylamino]-1-(5-phospho-beta-D-ribosyl)imidazole-4-carboxamide + L-glutamine = D-erythro-1-(imidazol-4-yl)glycerol 3-phosphate + 5-amino-1-(5-phospho-beta-D-ribosyl)imidazole-4-carboxamide + L-glutamate + H(+). It functions in the pathway amino-acid biosynthesis; L-histidine biosynthesis; L-histidine from 5-phospho-alpha-D-ribose 1-diphosphate: step 5/9. Functionally, IGPS catalyzes the conversion of PRFAR and glutamine to IGP, AICAR and glutamate. The HisF subunit catalyzes the cyclization activity that produces IGP and AICAR from PRFAR using the ammonia provided by the HisH subunit. The sequence is that of Imidazole glycerol phosphate synthase subunit HisF from Prosthecochloris aestuarii (strain DSM 271 / SK 413).